A 588-amino-acid chain; its full sequence is Neuropeptide-like 1 (588 aa).

The propeptide occupies 1–179 (MQCIPKKTFM…DPEVLEYSPD (179 aa)). Positions 115–143 (NGDLPITIQERESDNDDEEKRSASSSDNV) are disordered. At Thr194 the chain carries Threonine amide. Serine amide occurs at positions 210, 227, and 244. At Tyr260 the chain carries Tyrosine amide. A Glutamic acid 1-amide modification is found at Glu281. A propeptide spanning residues 285-299 (SIASLARSGDWPSVA) is cleaved from the precursor. Tyr318 is subject to Tyrosine amide. A propeptide spanning residues 321–588 (SLSDDREAPS…SNSHIAPRSM (268 aa)) is cleaved from the precursor. The tract at residues 342–382 (GNSEGKENEWQATPFTVSEDLDEGKAKNRSNRRIEASQTRH) is disordered.

The protein resides in the secreted. The polypeptide is Neuropeptide-like 1 (Camponotus floridanus (Florida carpenter ant)).